The primary structure comprises 265 residues: Hydroxyethylthiazole kinase (265 aa).

Met-36 provides a ligand contact to substrate. ATP contacts are provided by Lys-112 and Ser-160. Gly-187 contacts substrate.

This sequence belongs to the Thz kinase family. It depends on Mg(2+) as a cofactor.

The catalysed reaction is 5-(2-hydroxyethyl)-4-methylthiazole + ATP = 4-methyl-5-(2-phosphooxyethyl)-thiazole + ADP + H(+). Its pathway is cofactor biosynthesis; thiamine diphosphate biosynthesis; 4-methyl-5-(2-phosphoethyl)-thiazole from 5-(2-hydroxyethyl)-4-methylthiazole: step 1/1. Functionally, catalyzes the phosphorylation of the hydroxyl group of 4-methyl-5-beta-hydroxyethylthiazole (THZ). The polypeptide is Hydroxyethylthiazole kinase (Clostridium perfringens (strain ATCC 13124 / DSM 756 / JCM 1290 / NCIMB 6125 / NCTC 8237 / Type A)).